The sequence spans 260 residues: Phosphatidylglycerol--prolipoprotein diacylglyceryl transferase (260 aa).

The next 3 helical transmembrane spans lie at 16–36 (LEFR…YFIV), 55–75 (VIFS…ILFY), and 87–107 (LFAV…VILA). Position 138 (arginine 138) interacts with a 1,2-diacyl-sn-glycero-3-phospho-(1'-sn-glycerol). Transmembrane regions (helical) follow at residues 198–218 (GVVF…VEFF) and 232–252 (FSMG…MAVL).

This sequence belongs to the Lgt family.

The protein resides in the cell inner membrane. The enzyme catalyses L-cysteinyl-[prolipoprotein] + a 1,2-diacyl-sn-glycero-3-phospho-(1'-sn-glycerol) = an S-1,2-diacyl-sn-glyceryl-L-cysteinyl-[prolipoprotein] + sn-glycerol 1-phosphate + H(+). The protein operates within protein modification; lipoprotein biosynthesis (diacylglyceryl transfer). Catalyzes the transfer of the diacylglyceryl group from phosphatidylglycerol to the sulfhydryl group of the N-terminal cysteine of a prolipoprotein, the first step in the formation of mature lipoproteins. The polypeptide is Phosphatidylglycerol--prolipoprotein diacylglyceryl transferase (Geobacter sulfurreducens (strain ATCC 51573 / DSM 12127 / PCA)).